Here is a 447-residue protein sequence, read N- to C-terminus: UPF0328 protein ECU10_1870 (447 aa).

Basic and acidic residues-rich tracts occupy residues 1–10 (MPSDHPDFRS) and 64–84 (HTEGCHTHEANPEPNTKHTET). Disordered regions lie at residues 1–103 (MPSD…TATP) and 147–173 (VKSQSVSHRAPITYQPPRPTTTSNPRI). Pro residues predominate over residues 92–103 (CPPPHPGPTATP).

The protein belongs to the UPF0328 family.

This is UPF0328 protein ECU10_1870 from Encephalitozoon cuniculi (strain GB-M1) (Microsporidian parasite).